A 182-amino-acid polypeptide reads, in one-letter code: Ribosome maturation factor RimM (182 aa).

Residues 103–182 (DGSYYWKDLM…TIEVDWDPGF (80 aa)) enclose the PRC barrel domain.

Belongs to the RimM family. Binds ribosomal protein uS19.

Its subcellular location is the cytoplasm. An accessory protein needed during the final step in the assembly of 30S ribosomal subunit, possibly for assembly of the head region. Essential for efficient processing of 16S rRNA. May be needed both before and after RbfA during the maturation of 16S rRNA. It has affinity for free ribosomal 30S subunits but not for 70S ribosomes. In Citrobacter koseri (strain ATCC BAA-895 / CDC 4225-83 / SGSC4696), this protein is Ribosome maturation factor RimM.